The primary structure comprises 337 residues: Casein kinase II subunit alpha (337 aa).

The 286-residue stretch at 47–332 (YEIIRKIGRG…TREAMEHPYF (286 aa)) folds into the Protein kinase domain. ATP-binding positions include 53 to 61 (IGRGKYSEV) and lysine 76. Aspartate 164 (proton acceptor) is an active-site residue.

It belongs to the protein kinase superfamily. CMGC Ser/Thr protein kinase family. CK2 subfamily. In terms of assembly, tetramer of two alpha and two beta chains.

The enzyme catalyses L-seryl-[protein] + ATP = O-phospho-L-seryl-[protein] + ADP + H(+). The catalysed reaction is L-threonyl-[protein] + ATP = O-phospho-L-threonyl-[protein] + ADP + H(+). In terms of biological role, casein kinases are operationally defined by their preferential utilization of acidic proteins such as caseins as substrates. The alpha chain contains the catalytic site. The sequence is that of Casein kinase II subunit alpha (casK) from Dictyostelium discoideum (Social amoeba).